A 90-amino-acid chain; its full sequence is Small ribosomal subunit protein uS15c (90 aa).

This sequence belongs to the universal ribosomal protein uS15 family. As to quaternary structure, part of the 30S ribosomal subunit.

Its subcellular location is the plastid. The protein localises to the chloroplast. The chain is Small ribosomal subunit protein uS15c (rps15) from Platanus occidentalis (Sycamore).